Here is a 228-residue protein sequence, read N- to C-terminus: Glucose-induced degradation protein 8 homolog (228 aa).

Residues 29–61 (SKSDLNKLVMNYLVIEGYQEAAAKFQEESSTQT) form the LisH domain. The CTLH domain maps to 67 to 124 (SIADRMAIRSAIQCGDVEKGIEIVNDLNPEILDTNPQLYFHLQQQKLIELIRKGMTAE).

This sequence belongs to the GID8 family.

It localises to the cytoplasm. It is found in the nucleus. Functionally, core component of the CTLH E3 ubiquitin-protein ligase complex that mediates ubiquitination and subsequent proteasomal degradation of target proteins. Acts as a positive regulator of Wnt signaling pathway by promoting beta-catenin (CTNNB1) nuclear accumulation. The polypeptide is Glucose-induced degradation protein 8 homolog (Dictyostelium discoideum (Social amoeba)).